We begin with the raw amino-acid sequence, 170 residues long: 3-hydroxyanthranilate 3,4-dioxygenase (170 aa).

Position 44 (R44) interacts with O2. Positions 48, 54, and 92 each coordinate Fe cation. E54 is a substrate binding site. The substrate site is built by R96 and E106. 4 residues coordinate a divalent metal cation: C121, C124, C158, and C161.

This sequence belongs to the 3-HAO family. Requires Fe(2+) as cofactor.

It is found in the cytoplasm. It catalyses the reaction 3-hydroxyanthranilate + O2 = (2Z,4Z)-2-amino-3-carboxymuconate 6-semialdehyde. The protein operates within cofactor biosynthesis; NAD(+) biosynthesis; quinolinate from L-kynurenine: step 3/3. Its function is as follows. Catalyzes the oxidative ring opening of 3-hydroxyanthranilate to 2-amino-3-carboxymuconate semialdehyde, which spontaneously cyclizes to quinolinate. The protein is 3-hydroxyanthranilate 3,4-dioxygenase of Scheffersomyces stipitis (strain ATCC 58785 / CBS 6054 / NBRC 10063 / NRRL Y-11545) (Yeast).